A 386-amino-acid chain; its full sequence is 2,3-diketo-5-methylthiopentyl-1-phosphate enolase (386 aa).

K85 serves as the catalytic Proton acceptor. Substrate-binding positions include K131, 157-160 (KDDE), H248, G316, and 338-339 (GT). Mg(2+) contacts are provided by K157, D159, and E160. An N6-carboxylysine modification is found at K157.

It belongs to the RuBisCO large chain family. Type IV subfamily. In terms of assembly, homodimer. It depends on Mg(2+) as a cofactor.

The enzyme catalyses 5-methylsulfanyl-2,3-dioxopentyl phosphate = 2-hydroxy-5-methylsulfanyl-3-oxopent-1-enyl phosphate. It functions in the pathway amino-acid biosynthesis; L-methionine biosynthesis via salvage pathway; L-methionine from S-methyl-5-thio-alpha-D-ribose 1-phosphate: step 3/6. Its function is as follows. Catalyzes the enolization of 2,3-diketo-5-methylthiopentyl-1-phosphate (DK-MTP-1-P) into 2-hydroxy-3-keto-5-methylthiopentenyl-1-phosphate (HK-MTPenyl-1-P). In Microcystis aeruginosa (strain NIES-843 / IAM M-2473), this protein is 2,3-diketo-5-methylthiopentyl-1-phosphate enolase.